The chain runs to 285 residues: tRNA pseudouridine synthase B (285 aa).

The active-site Nucleophile is D40.

This sequence belongs to the pseudouridine synthase TruB family. Type 1 subfamily.

It carries out the reaction uridine(55) in tRNA = pseudouridine(55) in tRNA. Functionally, responsible for synthesis of pseudouridine from uracil-55 in the psi GC loop of transfer RNAs. In Caldanaerobacter subterraneus subsp. tengcongensis (strain DSM 15242 / JCM 11007 / NBRC 100824 / MB4) (Thermoanaerobacter tengcongensis), this protein is tRNA pseudouridine synthase B.